We begin with the raw amino-acid sequence, 239 residues long: Large ribosomal subunit protein uL2 (239 aa).

It belongs to the universal ribosomal protein uL2 family.

It is found in the cytoplasm. This chain is Large ribosomal subunit protein uL2 (RPL8), found in Encephalitozoon cuniculi (strain GB-M1) (Microsporidian parasite).